We begin with the raw amino-acid sequence, 634 residues long: 1-deoxy-D-xylulose-5-phosphate synthase (634 aa).

Thiamine diphosphate is bound by residues His-79 and 120 to 122; that span reads GHA. Mg(2+) is bound at residue Asp-151. Residues 152–153, Asn-180, Tyr-292, and Glu-376 contribute to the thiamine diphosphate site; that span reads GS. Asn-180 contacts Mg(2+).

This sequence belongs to the transketolase family. DXPS subfamily. As to quaternary structure, homodimer. Mg(2+) serves as cofactor. Requires thiamine diphosphate as cofactor.

It carries out the reaction D-glyceraldehyde 3-phosphate + pyruvate + H(+) = 1-deoxy-D-xylulose 5-phosphate + CO2. It participates in metabolic intermediate biosynthesis; 1-deoxy-D-xylulose 5-phosphate biosynthesis; 1-deoxy-D-xylulose 5-phosphate from D-glyceraldehyde 3-phosphate and pyruvate: step 1/1. Its function is as follows. Catalyzes the acyloin condensation reaction between C atoms 2 and 3 of pyruvate and glyceraldehyde 3-phosphate to yield 1-deoxy-D-xylulose-5-phosphate (DXP). This chain is 1-deoxy-D-xylulose-5-phosphate synthase, found in Porphyromonas gingivalis (strain ATCC BAA-308 / W83).